The sequence spans 294 residues: 4-diphosphocytidyl-2-C-methyl-D-erythritol kinase (294 aa).

The active site involves lysine 15. Position 101–111 (101–111) interacts with ATP; the sequence is PSEAGLGGGSS. The active site involves aspartate 143.

The protein belongs to the GHMP kinase family. IspE subfamily.

It catalyses the reaction 4-CDP-2-C-methyl-D-erythritol + ATP = 4-CDP-2-C-methyl-D-erythritol 2-phosphate + ADP + H(+). The protein operates within isoprenoid biosynthesis; isopentenyl diphosphate biosynthesis via DXP pathway; isopentenyl diphosphate from 1-deoxy-D-xylulose 5-phosphate: step 3/6. In terms of biological role, catalyzes the phosphorylation of the position 2 hydroxy group of 4-diphosphocytidyl-2C-methyl-D-erythritol. The protein is 4-diphosphocytidyl-2-C-methyl-D-erythritol kinase of Fusobacterium nucleatum subsp. nucleatum (strain ATCC 25586 / DSM 15643 / BCRC 10681 / CIP 101130 / JCM 8532 / KCTC 2640 / LMG 13131 / VPI 4355).